The chain runs to 196 residues: GTP cyclohydrolase 1 (196 aa).

Residues C86, H89, and C158 each contribute to the Zn(2+) site.

The protein belongs to the GTP cyclohydrolase I family. In terms of assembly, toroid-shaped homodecamer, composed of two pentamers of five dimers.

The catalysed reaction is GTP + H2O = 7,8-dihydroneopterin 3'-triphosphate + formate + H(+). It functions in the pathway cofactor biosynthesis; 7,8-dihydroneopterin triphosphate biosynthesis; 7,8-dihydroneopterin triphosphate from GTP: step 1/1. This is GTP cyclohydrolase 1 from Clostridium botulinum (strain ATCC 19397 / Type A).